We begin with the raw amino-acid sequence, 361 residues long: Small ribosomal subunit protein mS46 (361 aa).

The transit peptide at 1-14 (MRSSMFRCVSRAHY) directs the protein to the mitochondrion. Residues 37 to 99 (ASSNALKLDK…SDSVRANKQQ (63 aa)) are disordered. Basic and acidic residues predominate over residues 43-52 (KLDKMKEGRM). The segment covering 59–68 (GNQNRNSMNN) has biased composition (low complexity). Over residues 69 to 91 (KESRGREGNQGERNMRLKNRSSD) the composition is skewed to basic and acidic residues.

It belongs to the mitochondrion-specific ribosomal protein mS46 family. As to quaternary structure, component of the mitochondrial small ribosomal subunit (mt-SSU). Mature yeast 74S mitochondrial ribosomes consist of a small (37S) and a large (54S) subunit. The 37S small subunit contains a 15S ribosomal RNA (15S mt-rRNA) and 34 different proteins. The 54S large subunit contains a 21S rRNA (21S mt-rRNA) and 46 different proteins.

The protein localises to the mitochondrion. Component of the mitochondrial ribosome (mitoribosome), a dedicated translation machinery responsible for the synthesis of mitochondrial genome-encoded proteins, including at least some of the essential transmembrane subunits of the mitochondrial respiratory chain. The mitoribosomes are attached to the mitochondrial inner membrane and translation products are cotranslationally integrated into the membrane. This is Small ribosomal subunit protein mS46 (RSM28) from Saccharomyces cerevisiae (strain ATCC 204508 / S288c) (Baker's yeast).